Consider the following 110-residue polypeptide: Large ribosomal subunit protein uL22 (110 aa).

This sequence belongs to the universal ribosomal protein uL22 family. In terms of assembly, part of the 50S ribosomal subunit.

Its function is as follows. This protein binds specifically to 23S rRNA; its binding is stimulated by other ribosomal proteins, e.g. L4, L17, and L20. It is important during the early stages of 50S assembly. It makes multiple contacts with different domains of the 23S rRNA in the assembled 50S subunit and ribosome. Functionally, the globular domain of the protein is located near the polypeptide exit tunnel on the outside of the subunit, while an extended beta-hairpin is found that lines the wall of the exit tunnel in the center of the 70S ribosome. This chain is Large ribosomal subunit protein uL22, found in Vibrio cholerae serotype O1 (strain ATCC 39541 / Classical Ogawa 395 / O395).